Consider the following 293-residue polypeptide: ATP synthase gamma chain (293 aa).

The protein belongs to the ATPase gamma chain family. As to quaternary structure, F-type ATPases have 2 components, CF(1) - the catalytic core - and CF(0) - the membrane proton channel. CF(1) has five subunits: alpha(3), beta(3), gamma(1), delta(1), epsilon(1). CF(0) has three main subunits: a, b and c.

It is found in the cell inner membrane. Produces ATP from ADP in the presence of a proton gradient across the membrane. The gamma chain is believed to be important in regulating ATPase activity and the flow of protons through the CF(0) complex. The chain is ATP synthase gamma chain from Chlorobium chlorochromatii (strain CaD3).